A 430-amino-acid polypeptide reads, in one-letter code: Adenylosuccinate synthetase (430 aa).

GTP contacts are provided by residues 11–17 and 39–41; these read GDEGKGK and GHS. Aspartate 12 (proton acceptor) is an active-site residue. Mg(2+) is bound by residues aspartate 12 and glycine 39. Residues 12–15, 37–40, threonine 129, arginine 143, asparagine 221, threonine 236, and arginine 300 each bind IMP; these read DEGK and NAGH. Catalysis depends on histidine 40, which acts as the Proton donor. Substrate is bound at residue 296–302; it reads VSTGRKR. Residues arginine 302, 328–330, and 412–414 each bind GTP; these read KLD and GTG.

Belongs to the adenylosuccinate synthetase family. As to quaternary structure, homodimer. Mg(2+) is required as a cofactor.

It localises to the cytoplasm. It catalyses the reaction IMP + L-aspartate + GTP = N(6)-(1,2-dicarboxyethyl)-AMP + GDP + phosphate + 2 H(+). It participates in purine metabolism; AMP biosynthesis via de novo pathway; AMP from IMP: step 1/2. Plays an important role in the de novo pathway and in the salvage pathway of purine nucleotide biosynthesis. Catalyzes the first committed step in the biosynthesis of AMP from IMP. This Sordaria macrospora (strain ATCC MYA-333 / DSM 997 / K(L3346) / K-hell) protein is Adenylosuccinate synthetase.